Consider the following 296-residue polypeptide: Light-independent protochlorophyllide reductase iron-sulfur ATP-binding protein (296 aa).

The interval 1-20 (MTTTLSRPTDGEGSVQVQQD) is disordered. ATP contacts are provided by residues 39–44 (GIGKST) and Lys68. A Mg(2+)-binding site is contributed by Ser43. [4Fe-4S] cluster-binding residues include Cys124 and Cys158. 209 to 210 (NR) is an ATP binding site.

Belongs to the NifH/BchL/ChlL family. As to quaternary structure, homodimer. Protochlorophyllide reductase is composed of three subunits; ChlL, ChlN and ChlB. Requires [4Fe-4S] cluster as cofactor.

The catalysed reaction is chlorophyllide a + oxidized 2[4Fe-4S]-[ferredoxin] + 2 ADP + 2 phosphate = protochlorophyllide a + reduced 2[4Fe-4S]-[ferredoxin] + 2 ATP + 2 H2O. Its pathway is porphyrin-containing compound metabolism; chlorophyll biosynthesis (light-independent). In terms of biological role, component of the dark-operative protochlorophyllide reductase (DPOR) that uses Mg-ATP and reduced ferredoxin to reduce ring D of protochlorophyllide (Pchlide) to form chlorophyllide a (Chlide). This reaction is light-independent. The L component serves as a unique electron donor to the NB-component of the complex, and binds Mg-ATP. The chain is Light-independent protochlorophyllide reductase iron-sulfur ATP-binding protein from Synechococcus sp. (strain CC9902).